The primary structure comprises 587 residues: Chaperonin CPN60, mitochondrial (587 aa).

A mitochondrion-targeting transit peptide spans methionine 1–tyrosine 32.

Belongs to the chaperonin (HSP60) family.

The protein localises to the mitochondrion. Implicated in mitochondrial protein import and macromolecular assembly. May facilitate the correct folding of imported proteins. May also prevent misfolding and promote the refolding and proper assembly of unfolded polypeptides generated under stress conditions in the mitochondrial matrix. The sequence is that of Chaperonin CPN60, mitochondrial from Brassica napus (Rape).